We begin with the raw amino-acid sequence, 142 residues long: Large ribosomal subunit protein uL11 (142 aa).

This sequence belongs to the universal ribosomal protein uL11 family. Part of the ribosomal stalk of the 50S ribosomal subunit. Interacts with L10 and the large rRNA to form the base of the stalk. L10 forms an elongated spine to which L12 dimers bind in a sequential fashion forming a multimeric L10(L12)X complex. One or more lysine residues are methylated.

Functionally, forms part of the ribosomal stalk which helps the ribosome interact with GTP-bound translation factors. The sequence is that of Large ribosomal subunit protein uL11 from Shewanella frigidimarina (strain NCIMB 400).